The following is a 229-amino-acid chain: Ribosome maturation factor RimM (229 aa).

The tract at residues 1-21 (MAGHDSGNAKRGRSPSFGVFV) is disordered. Residues 148–229 (ADEFYWVDLI…RVVVDWEADY (82 aa)) enclose the PRC barrel domain.

This sequence belongs to the RimM family. As to quaternary structure, binds ribosomal protein uS19.

The protein localises to the cytoplasm. An accessory protein needed during the final step in the assembly of 30S ribosomal subunit, possibly for assembly of the head region. Essential for efficient processing of 16S rRNA. May be needed both before and after RbfA during the maturation of 16S rRNA. It has affinity for free ribosomal 30S subunits but not for 70S ribosomes. In Burkholderia mallei (strain NCTC 10247), this protein is Ribosome maturation factor RimM.